Here is a 425-residue protein sequence, read N- to C-terminus: Serine--tRNA ligase (425 aa).

T231–E233 lines the L-serine pocket. Residues R262 to E264 and V278 contribute to the ATP site. E285 serves as a coordination point for L-serine. E349–S352 provides a ligand contact to ATP. T384 is a binding site for L-serine.

Belongs to the class-II aminoacyl-tRNA synthetase family. Type-1 seryl-tRNA synthetase subfamily. As to quaternary structure, homodimer. The tRNA molecule binds across the dimer.

Its subcellular location is the cytoplasm. It catalyses the reaction tRNA(Ser) + L-serine + ATP = L-seryl-tRNA(Ser) + AMP + diphosphate + H(+). The enzyme catalyses tRNA(Sec) + L-serine + ATP = L-seryl-tRNA(Sec) + AMP + diphosphate + H(+). Its pathway is aminoacyl-tRNA biosynthesis; selenocysteinyl-tRNA(Sec) biosynthesis; L-seryl-tRNA(Sec) from L-serine and tRNA(Sec): step 1/1. In terms of biological role, catalyzes the attachment of serine to tRNA(Ser). Is also able to aminoacylate tRNA(Sec) with serine, to form the misacylated tRNA L-seryl-tRNA(Sec), which will be further converted into selenocysteinyl-tRNA(Sec). The protein is Serine--tRNA ligase of Dictyoglomus turgidum (strain DSM 6724 / Z-1310).